Here is a 659-residue protein sequence, read N- to C-terminus: WD repeat-containing protein 48 homolog (659 aa).

WD repeat units follow at residues 27–66 (RHRN…SQEP), 73–112 (HHND…CMST), 115–154 (THRD…ALTA), 166–205 (GSKD…KIAK), 208–247 (GHAE…CVQT), 250–289 (VHSE…NSVL), 292–331 (EERA…KLSF), and 337–376 (KGGA…KVED). Residues 592-613 (ASTGNSNSSQNNSQSDANSEGS) are disordered. Over residues 596-610 (NSNSSQNNSQSDANS) the composition is skewed to low complexity.

Belongs to the WD repeat WDR48 family. Catalytic component of the Usp12-46 deubiquitylase complex consisting of Usp12-46, Wdr20 and Uaf1; regulatory subunit that, together wtih Wdr20, stabilizes Usp12-46. The Usp12-46 deubiquitylase complex associates with arr/arrow; the interaction leads to deubiquitination and stabilization of arr/arrow.

In terms of biological role, regulatory component of the Usp12-46 deubiquitylase complex. activates deubiquitination by increasing the catalytic turnover without increasing the affinity of deubiquitinating enzymes for the substrate. The complex deubiquitylates the wg/wingless-signaling receptor arr/arrow, which stabilizes the receptor and increases its concentration at the cell surface; this enhances the sensitivity of cells to wg/wingless-signal stimulation. This increases the amplitude and spatial range of the signaling response to the wg/wingless morphogen gradient, facilitating the precise concentration-dependent regulation of its target genes. Together with Wdr20 and Usp12-46 required for wg/wingless-mediated signaling in the wing imaginal disc and for wg/wingless-dependent regulation of intestinal stem cell proliferation. The chain is WD repeat-containing protein 48 homolog from Aedes aegypti (Yellowfever mosquito).